A 331-amino-acid chain; its full sequence is Large ribosomal subunit protein uL3 (331 aa).

Belongs to the universal ribosomal protein uL3 family. Part of the 50S ribosomal subunit. Forms a cluster with proteins L14 and L24e.

In terms of biological role, one of the primary rRNA binding proteins, it binds directly near the 3'-end of the 23S rRNA, where it nucleates assembly of the 50S subunit. The chain is Large ribosomal subunit protein uL3 from Archaeoglobus fulgidus (strain ATCC 49558 / DSM 4304 / JCM 9628 / NBRC 100126 / VC-16).